The following is a 379-amino-acid chain: Alanine racemase (379 aa).

Residue Lys35 is the Proton acceptor; specific for D-alanine of the active site. Lys35 is subject to N6-(pyridoxal phosphate)lysine. Substrate is bound at residue Arg133. Tyr265 serves as the catalytic Proton acceptor; specific for L-alanine. Residue Met312 coordinates substrate.

It belongs to the alanine racemase family. The cofactor is pyridoxal 5'-phosphate.

The enzyme catalyses L-alanine = D-alanine. It functions in the pathway amino-acid biosynthesis; D-alanine biosynthesis; D-alanine from L-alanine: step 1/1. Functionally, catalyzes the interconversion of L-alanine and D-alanine. May also act on other amino acids. This is Alanine racemase (alr) from Treponema denticola (strain ATCC 35405 / DSM 14222 / CIP 103919 / JCM 8153 / KCTC 15104).